We begin with the raw amino-acid sequence, 273 residues long: DNA repair protein RecO (273 aa).

The tract at residues 249–273 (GRSLTEEPELKAEQTEAEKESQRPR) is disordered. Positions 252–273 (LTEEPELKAEQTEAEKESQRPR) are enriched in basic and acidic residues.

The protein belongs to the RecO family.

In terms of biological role, involved in DNA repair and RecF pathway recombination. The chain is DNA repair protein RecO from Heliobacterium modesticaldum (strain ATCC 51547 / Ice1).